A 432-amino-acid chain; its full sequence is Adenylosuccinate synthetase (432 aa).

GTP-binding positions include 12-18 and 40-42; these read GDEGKGK and GHT. Aspartate 13 serves as the catalytic Proton acceptor. Mg(2+) is bound by residues aspartate 13 and glycine 40. Residues 13–16, 38–41, threonine 129, arginine 143, glutamine 224, threonine 239, and arginine 303 each bind IMP; these read DEGK and NAGH. Histidine 41 serves as the catalytic Proton donor. Residue 299–305 coordinates substrate; sequence VTTGRRR. Residues arginine 305, 331-333, and 413-415 each bind GTP; these read KLD and GVG.

This sequence belongs to the adenylosuccinate synthetase family. As to quaternary structure, homodimer. Mg(2+) is required as a cofactor.

It is found in the cytoplasm. It carries out the reaction IMP + L-aspartate + GTP = N(6)-(1,2-dicarboxyethyl)-AMP + GDP + phosphate + 2 H(+). Its pathway is purine metabolism; AMP biosynthesis via de novo pathway; AMP from IMP: step 1/2. Its function is as follows. Plays an important role in the de novo pathway of purine nucleotide biosynthesis. Catalyzes the first committed step in the biosynthesis of AMP from IMP. This chain is Adenylosuccinate synthetase, found in Mycobacterium leprae (strain TN).